The chain runs to 20 residues: Acidic phospholipase A2 CbIbeta (20 aa).

Belongs to the phospholipase A2 family. Group II subfamily. D49 sub-subfamily. In terms of assembly, heterodimer of an acidic subunit (CbIalpha or CbIbeta) and a basic subunit (CbII). The acidic subunit (CbI) is non-toxic, and increases the toxicity of the basic subunit (CbII). It depends on Ca(2+) as a cofactor. Post-translationally, contains 7 disulfide bonds. In terms of tissue distribution, expressed by the venom gland.

Its subcellular location is the secreted. It catalyses the reaction a 1,2-diacyl-sn-glycero-3-phosphocholine + H2O = a 1-acyl-sn-glycero-3-phosphocholine + a fatty acid + H(+). Its function is as follows. Heterodimer: presynaptic neurotoxin. Functionally, monomer: Snake venom phospholipase A2 (PLA2) is inactive towards micellar phosphatidylcholine but is weakly active towards non-micellar dithiolecithin. PLA2 catalyzes the calcium-dependent hydrolysis of the 2-acyl groups in 3-sn-phosphoglycerides. This Pseudocerastes fieldi (Field's horned viper) protein is Acidic phospholipase A2 CbIbeta.